A 274-amino-acid chain; its full sequence is MAIHLYKTSTPSTRKRAVDSQGKSNPRNHLIYGQHRCGKGRNARGIITAGHRGGGHKRLYRQIDFRRNENNIYGRIVTIEYDPNRNAYICLIHYGDGEKRYILHPRGARIGDTIVSGTEVPIKMGNALPLTNIPLGTAIHNIEITLGKGGQLARAAGAVAKLISKEGKSAAVKLPSGEVRLISQNCSATVGQVGNVGVNRKSLGRAGSKRWLGKRPVVRGVAMNPVDHPHGGGEGKAPIGRKKPATPWGRPALGIRTRKRKKYNDNLILRRRSK.

2 disordered regions span residues 1 to 33 (MAIH…LIYG) and 223 to 265 (MNPV…KYND).

This sequence belongs to the universal ribosomal protein uL2 family. As to quaternary structure, part of the 50S ribosomal subunit.

It localises to the plastid. The protein resides in the chloroplast. In Pelargonium hortorum (Common geranium), this protein is Large ribosomal subunit protein uL2cz/uL2cy (rpl2-A).